A 432-amino-acid chain; its full sequence is Cyclic di-GMP phosphodiesterase CdgJ (432 aa).

Residues M1–I232 form the EAL domain. In terms of domain architecture, HDOD spans V226 to D413.

The enzyme catalyses 3',3'-c-di-GMP + H2O = 5'-phosphoguanylyl(3'-&gt;5')guanosine + H(+). In terms of biological role, phosphodiesterase (PDE) that catalyzes the hydrolysis of cyclic diguanylate (c-di-GMP). Positively regulates motility and negatively regulates biofilm formation. The protein is Cyclic di-GMP phosphodiesterase CdgJ of Vibrio cholerae serotype O1 (strain ATCC 39315 / El Tor Inaba N16961).